Reading from the N-terminus, the 184-residue chain is Elongation factor P (184 aa).

Belongs to the elongation factor P family.

The protein resides in the cytoplasm. It functions in the pathway protein biosynthesis; polypeptide chain elongation. In terms of biological role, involved in peptide bond synthesis. Stimulates efficient translation and peptide-bond synthesis on native or reconstituted 70S ribosomes in vitro. Probably functions indirectly by altering the affinity of the ribosome for aminoacyl-tRNA, thus increasing their reactivity as acceptors for peptidyl transferase. This Acidovorax ebreus (strain TPSY) (Diaphorobacter sp. (strain TPSY)) protein is Elongation factor P.